Reading from the N-terminus, the 484-residue chain is ATP synthase subunit beta (484 aa).

ATP is bound at residue 152 to 159 (GGAGVGKT).

Belongs to the ATPase alpha/beta chains family. As to quaternary structure, F-type ATPases have 2 components, CF(1) - the catalytic core - and CF(0) - the membrane proton channel. CF(1) has five subunits: alpha(3), beta(3), gamma(1), delta(1), epsilon(1). CF(0) has three main subunits: a(1), b(2) and c(9-12). The alpha and beta chains form an alternating ring which encloses part of the gamma chain. CF(1) is attached to CF(0) by a central stalk formed by the gamma and epsilon chains, while a peripheral stalk is formed by the delta and b chains.

It is found in the cell inner membrane. It catalyses the reaction ATP + H2O + 4 H(+)(in) = ADP + phosphate + 5 H(+)(out). Produces ATP from ADP in the presence of a proton gradient across the membrane. The catalytic sites are hosted primarily by the beta subunits. This Campylobacter lari (strain RM2100 / D67 / ATCC BAA-1060) protein is ATP synthase subunit beta.